Here is a 120-residue protein sequence, read N- to C-terminus: MTMTHLNRLILISLLFVSLLLKSSTASSTVVDEGNRTSRNFRYRTHRFVPRFNHHPYHVTPHRSCDSFIRPYARSMCIELQRIHRSSRKQPLLSPPPPEIDPRYGVDKRLVPSGPNPLHN.

Positions 1–26 (MTMTHLNRLILISLLFVSLLLKSSTA) are cleaved as a signal peptide. An N-linked (GlcNAc...) asparagine glycan is attached at N35. Positions 85 to 120 (RSSRKQPLLSPPPPEIDPRYGVDKRLVPSGPNPLHN) are disordered. Positions 100 to 110 (IDPRYGVDKRL) are enriched in basic and acidic residues. A hydroxyproline mark is found at P112 and P115. P115 carries an O-linked (Ara...) hydroxyproline glycan.

The protein belongs to the CLV3/ESR signal peptide family. The O-glycosylation (arabinosylation) of the hydroxyproline Pro-115 enhances binding affinity of the CLE9p peptide for its receptor. Mostly expressed in leaves, flowers, stems and apex, and, to a lower extent, in seedlings, roots, siliques and pollen.

The protein localises to the secreted. The protein resides in the extracellular space. Its function is as follows. Extracellular signal peptide that regulates cell fate. Represses root apical meristem maintenance. Regulates the transition of protophloem cells from proliferation to differentiation, thus impinging on postembryonic growth capacity of the root meristem; this signaling pathway requires CRN and CLV2. The protein is CLAVATA3/ESR (CLE)-related protein 9 of Arabidopsis thaliana (Mouse-ear cress).